A 271-amino-acid chain; its full sequence is Colicin-M (271 aa).

Residues 2-9 (ETLTVHAP) carry the TonB box motif.

Functionally, colicins are polypeptide toxins produced by and active against E.coli and closely related bacteria. Its function is as follows. This is a calcium-requiring inhibitor for murein biosynthesis; it causes lysis of sensitive cells accompanied by murein degradation. The target site is possibly the cytoplasmic membrane. The protein is Colicin-M (cma) of Escherichia coli.